Here is a 258-residue protein sequence, read N- to C-terminus: Isoprenyl transferase 1 (258 aa).

Asp-39 is an active-site residue. A Mg(2+)-binding site is contributed by Asp-39. Residues 40–43 (GNRR), Trp-44, Arg-52, His-57, and 85–87 (SND) each bind substrate. Catalysis depends on Asn-88, which acts as the Proton acceptor. Residues Arg-92, Arg-207, and 213–215 (RLS) contribute to the substrate site. Glu-226 contacts Mg(2+).

The protein belongs to the UPP synthase family. In terms of assembly, homodimer. Requires Mg(2+) as cofactor.

Catalyzes the condensation of isopentenyl diphosphate (IPP) with allylic pyrophosphates generating different type of terpenoids. This is Isoprenyl transferase 1 from Tropheryma whipplei (strain TW08/27) (Whipple's bacillus).